Here is a 171-residue protein sequence, read N- to C-terminus: Small ribosomal subunit protein uS5 (171 aa).

The region spanning 14-77 is the S5 DRBM domain; the sequence is LKEKLVMVNR…EKAKKKLLKI (64 aa).

It belongs to the universal ribosomal protein uS5 family. In terms of assembly, part of the 30S ribosomal subunit. Contacts proteins S4 and S8.

Functionally, with S4 and S12 plays an important role in translational accuracy. In terms of biological role, located at the back of the 30S subunit body where it stabilizes the conformation of the head with respect to the body. The protein is Small ribosomal subunit protein uS5 of Karelsulcia muelleri (strain GWSS) (Sulcia muelleri).